A 404-amino-acid chain; its full sequence is Druantia protein DruA (404 aa).

It is found in the cytoplasm. Component of antiviral defense system Druantia type I, composed of DruA, DruB, DruC, DruD and DruE. Expression of Druantia in E.coli (strain MG1655) confers resistance to phage lambda, SECphi18, SECphi27 and T4. The polypeptide is Druantia protein DruA (Escherichia coli (strain UMEA 4076-1)).